Consider the following 188-residue polypeptide: Crossover junction endodeoxyribonuclease RuvC (188 aa).

Active-site residues include Asp-7, Glu-68, and Asp-141. Asp-7, Glu-68, and Asp-141 together coordinate Mg(2+).

The protein belongs to the RuvC family. Homodimer which binds Holliday junction (HJ) DNA. The HJ becomes 2-fold symmetrical on binding to RuvC with unstacked arms; it has a different conformation from HJ DNA in complex with RuvA. In the full resolvosome a probable DNA-RuvA(4)-RuvB(12)-RuvC(2) complex forms which resolves the HJ. Mg(2+) serves as cofactor.

It localises to the cytoplasm. The enzyme catalyses Endonucleolytic cleavage at a junction such as a reciprocal single-stranded crossover between two homologous DNA duplexes (Holliday junction).. The RuvA-RuvB-RuvC complex processes Holliday junction (HJ) DNA during genetic recombination and DNA repair. Endonuclease that resolves HJ intermediates. Cleaves cruciform DNA by making single-stranded nicks across the HJ at symmetrical positions within the homologous arms, yielding a 5'-phosphate and a 3'-hydroxyl group; requires a central core of homology in the junction. The consensus cleavage sequence is 5'-(A/T)TT(C/G)-3'. Cleavage occurs on the 3'-side of the TT dinucleotide at the point of strand exchange. HJ branch migration catalyzed by RuvA-RuvB allows RuvC to scan DNA until it finds its consensus sequence, where it cleaves and resolves the cruciform DNA. In Mycobacterium tuberculosis (strain ATCC 25177 / H37Ra), this protein is Crossover junction endodeoxyribonuclease RuvC.